A 68-amino-acid polypeptide reads, in one-letter code: MQVSVRDNNVDQALRALKKKLQREGVFREMKLKQHFEKPSEKKAREKAEAIRRARKLARKKAQREGML.

This sequence belongs to the bacterial ribosomal protein bS21 family.

This is Small ribosomal subunit protein bS21 from Ruegeria pomeroyi (strain ATCC 700808 / DSM 15171 / DSS-3) (Silicibacter pomeroyi).